The primary structure comprises 474 residues: MSRLVVVSNRIAPPDEHAASAGGLAVGILGALKAAGGLWFGWSGETGNEDQPLKKVKKGNITWASFNLSEQDLDEYYNQFSNAVLWPAFHYRLDLVQFQRPAWDGYLRVNALLADKLLPLLQDDDIIWIHDYHLLPFAHELRKRGVNNRIGFLLHIPFPTPEIFNALPTYDTLLEQLCDYDLLGFQTENDRLAFLDCLSNLTRVTTRSAKSHTAWGKAFRTEVYPIGIEPKEIAKQAAGPLPPKLAQLKAELKNVQNIFSVERLDYSKGLPERFLAYEALLEKYPQHHGKIRYTQIAPTSRGDVQAYQDIRHQLENEAGRINGKYGQLGWTPLYYLNQHFDRKLLMKIFRYSDVGLVTPLRDGMNLVAKEYVAAQDPANPGVLVLSQFAGAANELTSALIVNPYDRDEVAAALDRALTMSLAERISRHAEMLDVIVKNDINHWQECFISDLKQIVPRSAESQQRDKVATFPKLA.

Position 10 (Arg-10) interacts with D-glucose 6-phosphate. Gly-22–Gly-23 provides a ligand contact to UDP-alpha-D-glucose. D-glucose 6-phosphate is bound by residues Tyr-77 and Asp-131. UDP-alpha-D-glucose contacts are provided by Arg-263 and Lys-268. Arg-301 provides a ligand contact to D-glucose 6-phosphate. UDP-alpha-D-glucose is bound by residues Phe-340 and Leu-366–Glu-370.

It belongs to the glycosyltransferase 20 family. In terms of assembly, homotetramer.

The enzyme catalyses D-glucose 6-phosphate + UDP-alpha-D-glucose = alpha,alpha-trehalose 6-phosphate + UDP + H(+). Its pathway is glycan biosynthesis; trehalose biosynthesis. Functionally, probably involved in the osmoprotection via the biosynthesis of trehalose. Catalyzes the transfer of glucose from UDP-alpha-D-glucose (UDP-Glc) to D-glucose 6-phosphate (Glc-6-P) to form trehalose-6-phosphate. Acts with retention of the anomeric configuration of the UDP-sugar donor. This chain is Trehalose-6-phosphate synthase, found in Pseudomonas savastanoi (Pseudomonas syringae pv. savastanoi).